We begin with the raw amino-acid sequence, 621 residues long: DnaJ homolog subfamily C member 2 (621 aa).

An N-acetylmethionine modification is found at Met1. 4 positions are modified to phosphoserine: Ser47, Ser49, Ser60, and Ser63. Positions 88–161 (DHYAVLGLGH…VKRRAFNSVD (74 aa)) constitute a J domain. The ZRF1-UBD stretch occupies residues 160–250 (VDPTFDNSVP…RDERKWIEKQ (91 aa)). Residue Ser183 is modified to Phosphoserine. 2 disordered regions span residues 287–312 (GKAK…KEKQ) and 426–453 (KEEA…GSKN). 2 SANT domains span residues 449-511 (SGSK…KLDP) and 549-604 (IDSI…EMVK).

As to quaternary structure, component of ribosome-associated complex (RAC), a heterodimer composed of Hsp70/DnaK-type chaperone HSPA14 and Hsp40/DnaJ-type chaperone DNAJC2. Interacts (via ZRF1-UBD region) with ID1. Post-translationally, phosphorylated in M (mitotic) phase.

It localises to the nucleus. Its subcellular location is the cytoplasm. The protein localises to the cytosol. In terms of biological role, acts both as a chaperone in the cytosol and as a chromatin regulator in the nucleus. When cytosolic, acts as a molecular chaperone: component of the ribosome-associated complex (RAC), a complex involved in folding or maintaining nascent polypeptides in a folding-competent state. In the RAC complex, stimulates the ATPase activity of the ribosome-associated pool of Hsp70-type chaperones HSPA14 that bind to the nascent polypeptide chain. When nuclear, mediates the switching from polycomb-repressed genes to an active state: specifically recruited at histone H2A ubiquitinated at 'Lys-119' (H2AK119ub), and promotes the displacement of the polycomb PRC1 complex from chromatin, thereby facilitating transcription activation. This Rattus norvegicus (Rat) protein is DnaJ homolog subfamily C member 2 (Dnajc2).